Reading from the N-terminus, the 604-residue chain is MEGQLLRGLAAQQDCSIREKIDLEIRMREGIWKLLSLSTKKDQVLHAVKNLMVCSARIQAYTAELQKSKEEIANQTGARLVLDSSSENKEGESCRGKIALSDIRIPLMWKDSDHFSNKECTQRFAIFCLFRMGAQVFDTDMVIVDQTVTDICFENVTIFNEAGPDFQIKIEVYSCSAEESSLTNTPRKLAKKLKTSISKATGRKISAALQEESPEACLLAGSVAGAKYHLLAHTTLTLENAGDCFKTHNLSVHGDEECSFWLPLYGNVCCRLVAQPACMAADAFAGFLNEQQTGKGLVGWRRLYCALRGGKLRCFYGPEEIEAKVEPALVVPIDKETRIQAVEKDSKKMHCFSVLSTAAGRAVSHIFAADSLADFQEWMGAFRQHFFDLSQWKHCCEELMRIEIMSPRKPPLFLAKEATSVYYDMSIDSPVKLESVTDIIQKKIGETNRQFLIGRDDQSAAPPWAAVFDGNHEMVIEKKVLSPIGEPAPDGKRKKRRAPLPPTDQPPFCIKTQGRANQSKDSATQAGVSGASSSPSDPRLSPPTHHLQKPVAAPRKLLPARKNSSADIGHTDTKTSLDAKPVPVPRQKSIRDILDPRSWLQAQV.

The 74-residue stretch at 1 to 74 (MEGQLLRGLA…LQKSKEEIAN (74 aa)) folds into the REM-1 domain. Residues 53-79 (VCSARIQAYTAELQKSKEEIANQTGAR) are a coiled coil. Residues 281-387 (ADAFAGFLNE…WMGAFRQHFF (107 aa)) form the PH domain. The segment at 481-590 (LSPIGEPAPD…PVPVPRQKSI (110 aa)) is disordered. The span at 514–527 (GRANQSKDSATQAG) shows a compositional bias: polar residues. Positions 529-543 (SGASSSPSDPRLSPP) are enriched in low complexity.

In terms of biological role, may play an important role in lymphopoiesis. The polypeptide is Rhotekin-2 (Rtkn2) (Mus musculus (Mouse)).